An 81-amino-acid chain; its full sequence is Serine/arginine-rich splicing factor 6 (81 aa).

A compositionally biased stretch (basic residues) spans 1-48; sequence RSRSRSRRSSRSRSRSISKSRSRSRSRSKGRSRSRSKGRKSRSKSKSK. Residues 1-81 are disordered; that stretch reads RSRSRSRRSS…SRSRSRSRSP (81 aa). A compositionally biased stretch (basic and acidic residues) spans 62 to 71; the sequence is RSKDEYEKSR. Positions 72–81 are enriched in basic residues; the sequence is SRSRSRSRSP.

This sequence belongs to the splicing factor SR family. As to quaternary structure, binds SREK1/SFRS12. Interacts with DYRK1A. Post-translationally, extensively phosphorylated on serine residues in the RS domain. Phosphorylated by DYRK1A, probably in the RS domain. Phosphorylation by DYRK1A modulates alternative splice site selection and inhibits the expression of MAPT/Tau exon 10.

Its subcellular location is the nucleus. The protein resides in the nucleus speckle. Plays a role in constitutive splicing and modulates the selection of alternative splice sites. Plays a role in the alternative splicing of MAPT/Tau exon 10. Binds to alternative exons of TNC pre-mRNA and promotes the expression of alternatively spliced TNC. Plays a role in wound healing and in the regulation of keratinocyte differentiation and proliferation via its role in alternative splicing. The protein is Serine/arginine-rich splicing factor 6 (SRSF6) of Oryctolagus cuniculus (Rabbit).